Reading from the N-terminus, the 274-residue chain is 3-methyl-2-oxobutanoate hydroxymethyltransferase (274 aa).

2 residues coordinate Mg(2+): aspartate 44 and aspartate 83. 3-methyl-2-oxobutanoate contacts are provided by residues 44–45, aspartate 83, and lysine 113; that span reads DS. Mg(2+) is bound at residue glutamate 115. Residue glutamate 182 is the Proton acceptor of the active site.

The protein belongs to the PanB family. As to quaternary structure, homodecamer; pentamer of dimers. Requires Mg(2+) as cofactor.

Its subcellular location is the cytoplasm. The catalysed reaction is 3-methyl-2-oxobutanoate + (6R)-5,10-methylene-5,6,7,8-tetrahydrofolate + H2O = 2-dehydropantoate + (6S)-5,6,7,8-tetrahydrofolate. Its pathway is cofactor biosynthesis; (R)-pantothenate biosynthesis; (R)-pantoate from 3-methyl-2-oxobutanoate: step 1/2. Catalyzes the reversible reaction in which hydroxymethyl group from 5,10-methylenetetrahydrofolate is transferred onto alpha-ketoisovalerate to form ketopantoate. This chain is 3-methyl-2-oxobutanoate hydroxymethyltransferase, found in Campylobacter jejuni (strain RM1221).